The sequence spans 228 residues: uncharacterized protein (228 aa).

Positions 1-34 (MPRDTKPYSRPANAPRPGVKTERSNQFKAASTKY) are disordered.

This is an uncharacterized protein from Orgyia pseudotsugata (Douglas-fir tussock moth).